The chain runs to 307 residues: MEGVVLLHKPKGMTSHDCVFKLRKILREKRIGHTGTLDPDVTGVLPICVGRATKIAQFLTSETKTYEGEVTLGFSTTTEDASGEVVETKYVDRVITRKEVEEALATLTGTIEQMPPMFSAVKVNGKKLYEYARAGQEVERPVRTITIHEFVLLDDREVFEGENISFRFRVTCSKGTYVRTLAVMIGEKLGFPSHMSHLVRTASGEFLLEDCISFEEIEENVQNGTVESIFISIDEALSKFPKMVVDEKQAEKIKNGMFLKNELQITAPFITVFDKNDRCLAIYEHHPKHPGMLKPMKVLVNNQELKL.

Catalysis depends on aspartate 38, which acts as the Nucleophile.

The protein belongs to the pseudouridine synthase TruB family. Type 1 subfamily.

It carries out the reaction uridine(55) in tRNA = pseudouridine(55) in tRNA. Its function is as follows. Responsible for synthesis of pseudouridine from uracil-55 in the psi GC loop of transfer RNAs. The chain is tRNA pseudouridine synthase B from Bacillus anthracis.